Here is a 501-residue protein sequence, read N- to C-terminus: uncharacterized protein (501 aa).

The BAR domain occupies 14–237; it reads EKFGFDRQKT…GFSKKRDNVN (224 aa). Threonine 285 is modified (phosphothreonine). Disordered stretches follow at residues 302 to 321 and 329 to 414; these read IASS…DVSD and SAVD…RSYS. The segment covering 309–320 has biased composition (basic and acidic residues); it reads QHTEDNYNKDVS. Residues 390-402 are compositionally biased toward polar residues; the sequence is SQCNVSPSPSNIS. Serine 414 carries the post-translational modification Phosphoserine. An SH3 domain is found at 421–487; sequence SSRKVVRMKY…PSNYCVPAHP (67 aa).

Its subcellular location is the cytoplasm. This is an uncharacterized protein from Schizosaccharomyces pombe (strain 972 / ATCC 24843) (Fission yeast).